The sequence spans 181 residues: Oligoribonuclease (181 aa).

Residues 8–171 (LIWIDLEMTG…DDIRESVAEL (164 aa)) enclose the Exonuclease domain. Y129 is an active-site residue.

The protein belongs to the oligoribonuclease family.

It is found in the cytoplasm. Its function is as follows. 3'-to-5' exoribonuclease specific for small oligoribonucleotides. This chain is Oligoribonuclease, found in Enterobacter sp. (strain 638).